The sequence spans 256 residues: Imidazole glycerol phosphate synthase subunit HisF (256 aa).

Residues aspartate 12 and aspartate 131 contribute to the active site.

The protein belongs to the HisA/HisF family. As to quaternary structure, heterodimer of HisH and HisF.

Its subcellular location is the cytoplasm. The catalysed reaction is 5-[(5-phospho-1-deoxy-D-ribulos-1-ylimino)methylamino]-1-(5-phospho-beta-D-ribosyl)imidazole-4-carboxamide + L-glutamine = D-erythro-1-(imidazol-4-yl)glycerol 3-phosphate + 5-amino-1-(5-phospho-beta-D-ribosyl)imidazole-4-carboxamide + L-glutamate + H(+). Its pathway is amino-acid biosynthesis; L-histidine biosynthesis; L-histidine from 5-phospho-alpha-D-ribose 1-diphosphate: step 5/9. Functionally, IGPS catalyzes the conversion of PRFAR and glutamine to IGP, AICAR and glutamate. The HisF subunit catalyzes the cyclization activity that produces IGP and AICAR from PRFAR using the ammonia provided by the HisH subunit. The protein is Imidazole glycerol phosphate synthase subunit HisF of Renibacterium salmoninarum (strain ATCC 33209 / DSM 20767 / JCM 11484 / NBRC 15589 / NCIMB 2235).